The following is a 378-amino-acid chain: C-type lectin domain family 17, member A (378 aa).

Residues 1–119 (MHNLYSITGY…PPLPCKPRNM (119 aa)) form a disordered region. Residues 1–172 (MHNLYSITGY…GCCQKRWMVY (172 aa)) lie on the Cytoplasmic side of the membrane. Acidic residues-rich tracts occupy residues 17–27 (MEEEEEDDDYE), 43–53 (MEEEEEDDDYE), and 69–79 (MEEEEEDDDYE). Positions 86 to 101 (KDLPPKPGSSAPPRPP) are enriched in pro residues. Residues 173–193 (LCLLVVTSLFLGCLGLTVTLI) traverse the membrane as a helical; Signal-anchor for type II membrane protein segment. Over 194-378 (KYQELMEELR…YWICERKCSC (185 aa)) the chain is Extracellular. Asparagine 215 and asparagine 237 each carry an N-linked (GlcNAc...) asparagine glycan. Disulfide bonds link cysteine 254–cysteine 265, cysteine 282–cysteine 372, and cysteine 350–cysteine 364. Positions 261–373 (FEGKCYYFSP…CYKTTYWICE (113 aa)) constitute a C-type lectin domain. N-linked (GlcNAc...) asparagine glycosylation occurs at asparagine 285. Positions 341, 343, 348, 360, and 361 each coordinate Ca(2+).

As to quaternary structure, oligomer; disulfide-linked. Post-translationally, phosphorylated on tyrosine residues. In terms of tissue distribution, expressed on dividing B-cells of germinal centers in various tissues, including lymph nodes, tonsils, stomach, intestine, appendix and spleen.

Its subcellular location is the membrane. In terms of biological role, cell surface receptor which may be involved in carbohydrate-mediated communication between cells in the germinal center. Binds glycans with terminal alpha-linked mannose or fucose residues. The polypeptide is C-type lectin domain family 17, member A (CLEC17A) (Homo sapiens (Human)).